Reading from the N-terminus, the 150-residue chain is SsrA-binding protein (150 aa).

This sequence belongs to the SmpB family.

The protein localises to the cytoplasm. Its function is as follows. Required for rescue of stalled ribosomes mediated by trans-translation. Binds to transfer-messenger RNA (tmRNA), required for stable association of tmRNA with ribosomes. tmRNA and SmpB together mimic tRNA shape, replacing the anticodon stem-loop with SmpB. tmRNA is encoded by the ssrA gene; the 2 termini fold to resemble tRNA(Ala) and it encodes a 'tag peptide', a short internal open reading frame. During trans-translation Ala-aminoacylated tmRNA acts like a tRNA, entering the A-site of stalled ribosomes, displacing the stalled mRNA. The ribosome then switches to translate the ORF on the tmRNA; the nascent peptide is terminated with the 'tag peptide' encoded by the tmRNA and targeted for degradation. The ribosome is freed to recommence translation, which seems to be the essential function of trans-translation. The chain is SsrA-binding protein from Chlamydia caviae (strain ATCC VR-813 / DSM 19441 / 03DC25 / GPIC) (Chlamydophila caviae).